A 353-amino-acid chain; its full sequence is Guanine nucleotide-binding protein alpha-1 subunit (353 aa).

Residues 1–26 (MGCGMSTEEKEGKARNEEIENQLKRD) form a disordered region. The N-myristoyl glycine moiety is linked to residue G2. C3 is lipidated: S-palmitoyl cysteine. The segment covering 7-26 (TEEKEGKARNEEIENQLKRD) has biased composition (basic and acidic residues). The G-alpha domain occupies 32-353 (NEIKMLLLGA…QENLRLCGLI (322 aa)). Residues 35-48 (KMLLLGAGESGKST) form a G1 motif region. Residues E43, S44, G45, K46, S47, T48, D150, L175, T181, G203, N269, K270, D272, and A325 each contribute to the GTP site. Mg(2+) is bound at residue S47. Residues 173–181 (DVLRSRVKT) are G2 motif. T181 provides a ligand contact to Mg(2+). The interval 196–205 (YRMFDVGGQR) is G3 motif. Residues 265 to 272 (ILFLNKID) form a G4 motif region. The segment at 323–328 (TCATDT) is G5 motif.

Belongs to the G-alpha family. G(q) subfamily. G proteins are composed of 3 units; alpha, beta and gamma. The alpha chain contains the guanine nucleotide binding site. Mg(2+) is required as a cofactor.

Functionally, guanine nucleotide-binding proteins (G proteins) are involved as modulators or transducers in various transmembrane signaling systems. The polypeptide is Guanine nucleotide-binding protein alpha-1 subunit (gna-1) (Neurospora crassa (strain ATCC 24698 / 74-OR23-1A / CBS 708.71 / DSM 1257 / FGSC 987)).